A 739-amino-acid polypeptide reads, in one-letter code: Eukaryotic translation initiation factor 3 subunit B (739 aa).

The sufficient for interaction with HCR1 and TIF32 stretch occupies residues 1-98 (MSINEEDYLQ…LFIQFKSTES (98 aa)). Residues 1 to 224 (MSINEEDYLQ…GIQSWGGANF (224 aa)) form a sufficient for interaction with PIC8 region. The 88-residue stretch at 37–124 (NYIIVDGAPI…HRLLVNKLSD (88 aa)) folds into the RRM domain. WD repeat units follow at residues 190-229 (PRKG…SIKR), 231-293 (FHQQ…RTFA), 301-339 (QKEM…QLLD), 343-385 (VKVD…QTAR), 453-502 (ELKD…KGGV), 537-579 (IENK…ETNK), and 592-630 (DKFS…YEFT).

It belongs to the eIF-3 subunit B family. Component of the eukaryotic translation initiation factor 3 (eIF-3) complex.

Its subcellular location is the cytoplasm. Functionally, RNA-binding component of the eukaryotic translation initiation factor 3 (eIF-3) complex, which is involved in protein synthesis of a specialized repertoire of mRNAs and, together with other initiation factors, stimulates binding of mRNA and methionyl-tRNAi to the 40S ribosome. The eIF-3 complex specifically targets and initiates translation of a subset of mRNAs involved in cell proliferation. The chain is Eukaryotic translation initiation factor 3 subunit B from Candida albicans (strain SC5314 / ATCC MYA-2876) (Yeast).